The sequence spans 150 residues: Cyclin-dependent kinases regulatory subunit (150 aa).

Over residues 115 to 137 (AAAQQQQQQQQQQQQQQQQHQTQ) the composition is skewed to low complexity. Positions 115–150 (AAAQQQQQQQQQQQQQQQQHQTQSISNDMQVPPQIS) are disordered.

The protein belongs to the CKS family. In terms of assembly, forms a stable but non-covalent complex with the CDC28 protein and with a cyclin.

In terms of biological role, binds to the catalytic subunit of the cyclin dependent kinase (CDC28) and is essential for its biological function. The chain is Cyclin-dependent kinases regulatory subunit from Saccharomyces cerevisiae (strain ATCC 204508 / S288c) (Baker's yeast).